A 383-amino-acid polypeptide reads, in one-letter code: Insecticidal crystal protein Cry35Ab1 (383 aa).

One can recognise a Ricin B-type lectin domain in the interval 26-138 (DDSGVSLMNK…NNPNQQWNLT (113 aa)).

It belongs to the toxin_10 family. Monomer in solution. Copurifies from parasporal inclusion bodies with Cry34Ab1. In terms of processing, proteolytic processing occurs near the C-terminus yielding a stable protein of approximately 40 kDa; this may be the active form of the protein.

Its function is as follows. Component of a binary insecticidal toxin active on western corn rootworm (WCR, Diabrotica virgifera subsp. virgifera Le Conte) and probably also on northern corn rootworm (D.barberi). Both proteins are required for maximal toxicity. The larval midgut epithelium is probably the primary target. This protein alone has no activity against southern corn rootworm (Diabrotica undecimpunctata howardi Barber), but it synergizes the toxic effect of its Cry34Ab1 partner. The 2 proteins individually and together form ion channels; channels made in the presence of the 2 proteins have higher conductance. Binds to WCR third instar midgut brush border membrane vesicles; binding improves over 10-fold in the presence of Cry34Ab1. The protein is Insecticidal crystal protein Cry35Ab1 of Bacillus thuringiensis.